Here is a 317-residue protein sequence, read N- to C-terminus: uncharacterized protein (317 aa).

Residues 68–78 (DSTNTDISNET) are compositionally biased toward low complexity. The tract at residues 68–87 (DSTNTDISNETPILSNNTPI) is disordered.

This is an uncharacterized protein from Methanocaldococcus jannaschii (strain ATCC 43067 / DSM 2661 / JAL-1 / JCM 10045 / NBRC 100440) (Methanococcus jannaschii).